Here is a 911-residue protein sequence, read N- to C-terminus: Protein dead ringer (911 aa).

Disordered stretches follow at residues 1 to 44 (MQLR…DCDS), 67 to 87 (SGGGGSFASPEPQTELPLSHH), and 172 to 274 (HVTS…QNNG). A compositionally biased stretch (basic and acidic residues) spans 19–34 (IERDSDLGDDLSHGDR). Position 30 is a phosphoserine (serine 30). Phosphothreonine is present on threonine 35. A Phosphoserine modification is found at serine 44. Positions 174–201 (TSSPSGGNGSSYNGGTTPTNSSNSNATT) are enriched in low complexity. A compositionally biased stretch (gly residues) spans 202-231 (NGGGTAGPGGTGGSGGGGGGGGGGGGGVGG). Low complexity predominate over residues 252–273 (AANSASNSSTSSEASNSSQQNN). The ARID domain maps to 293–385 (DPKRKEFLDD…YLYPYECEKK (93 aa)). 3 disordered regions span residues 501–633 (GMPP…VGSG), 662–775 (PSMG…GKLN), and 826–877 (QSET…DQDM). A compositionally biased stretch (low complexity) spans 512 to 550 (HQQQHSQQQQQQQHHHQQQQQQQSQQQHHLQQQRQRSQS). A compositionally biased stretch (polar residues) spans 570–600 (HNNNSPPGSAHTSPQQREALNLSDSPPNLTN). Phosphoserine is present on residues serine 592 and serine 594. The segment covering 601-621 (IKREREREPTPEPVDQDDKFV) has biased composition (basic and acidic residues). Residue serine 720 is modified to Phosphoserine. Positions 731 to 825 (TTGGSVGHRH…GVLVANVPLS (95 aa)) constitute an REKLES domain. The segment covering 737 to 751 (GHRHSSPVSTKKKGG) has biased composition (basic residues). Acidic residues predominate over residues 841-853 (TVEEEKDEEEEEE). The segment covering 854-870 (PKAAEEESHRSPVKQEN) has biased composition (basic and acidic residues).

In terms of tissue distribution, present in the pharyngeal muscles, hindgut epithelium, amnioserosa, ring gland, midgut-hindgut junction, posterior region of each brain lobe, longitudinal glial cells of the CNS and the salivary gland duct of germ-band retracted embryos.

It localises to the nucleus. Its function is as follows. Transcription factor which is a downstream target of gcm and repo. Directly or indirectly activates the transcription of locos and pros, which are essential for the development of some glial cells. Plays an essential role in defining the cell shape and migration characteristics of longitudinal glia that enable them to establish a normal axon scaffold. The protein is Protein dead ringer (retn) of Drosophila melanogaster (Fruit fly).